The sequence spans 408 residues: Neutral cholesterol ester hydrolase 1 (408 aa).

The Cytoplasmic portion of the chain corresponds to Met-1–Ser-4. The helical; Signal-anchor for type II membrane protein transmembrane segment at Cys-5–Ser-25 threads the bilayer. Residues Ala-26–Leu-408 are Lumenal-facing. An Involved in the stabilization of the negatively charged intermediate by the formation of the oxyanion hole motif is present at residues His-113–Gly-115. The active site involves Ser-191. Asn-270 is a glycosylation site (N-linked (GlcNAc...) asparagine). The active site involves Asp-348. Residue Asn-367 is glycosylated (N-linked (GlcNAc...) asparagine). Residue His-378 is part of the active site. A glycan (N-linked (GlcNAc...) asparagine) is linked at Asn-389.

Belongs to the 'GDXG' lipolytic enzyme family. Post-translationally, N-glycosylated.

It localises to the cell membrane. The protein resides in the microsome. It carries out the reaction a 1-O-alkyl-2-acetyl-sn-glycerol + H2O = a 1-O-alkyl-sn-glycerol + acetate + H(+). It catalyses the reaction 1-O-hexadecyl-2-acetyl-sn-glycerol + H2O = 1-O-hexadecyl-sn-glycerol + acetate + H(+). The catalysed reaction is a cholesterol ester + H2O = cholesterol + a fatty acid + H(+). The enzyme catalyses cholesteryl (9Z-octadecenoate) + H2O = cholesterol + (9Z)-octadecenoate + H(+). In terms of biological role, hydrolyzes 2-acetyl monoalkylglycerol ether (1-O-alkyl-2-acetyl-sn-glycerol), the penultimate precursor of the pathway for de novo synthesis of platelet-activating factor. May be responsible for the hydrolysis of cholesterol esters (such as cholesteryl (9Z-octadecenoate)) in macrophages. Also involved in organ detoxification by hydrolyzing exogenous organophosphorus compounds. This chain is Neutral cholesterol ester hydrolase 1 (Nceh1), found in Rattus norvegicus (Rat).